Here is a 266-residue protein sequence, read N- to C-terminus: Thymidylate synthase (266 aa).

Arg-24 contributes to the dUMP binding site. Residue His-54 participates in (6R)-5,10-methylene-5,6,7,8-tetrahydrofolate binding. 129-130 (RR) is a binding site for dUMP. Residue Cys-149 is the Nucleophile of the active site. Residues 169-172 (RSAD), Asn-180, and 210-212 (HIY) contribute to the dUMP site. Asp-172 contributes to the (6R)-5,10-methylene-5,6,7,8-tetrahydrofolate binding site. Residue Ala-265 participates in (6R)-5,10-methylene-5,6,7,8-tetrahydrofolate binding.

Belongs to the thymidylate synthase family. Bacterial-type ThyA subfamily. In terms of assembly, homodimer.

Its subcellular location is the cytoplasm. It catalyses the reaction dUMP + (6R)-5,10-methylene-5,6,7,8-tetrahydrofolate = 7,8-dihydrofolate + dTMP. It functions in the pathway pyrimidine metabolism; dTTP biosynthesis. Catalyzes the reductive methylation of 2'-deoxyuridine-5'-monophosphate (dUMP) to 2'-deoxythymidine-5'-monophosphate (dTMP) while utilizing 5,10-methylenetetrahydrofolate (mTHF) as the methyl donor and reductant in the reaction, yielding dihydrofolate (DHF) as a by-product. This enzymatic reaction provides an intracellular de novo source of dTMP, an essential precursor for DNA biosynthesis. The polypeptide is Thymidylate synthase (Mycolicibacterium smegmatis (strain ATCC 700084 / mc(2)155) (Mycobacterium smegmatis)).